A 150-amino-acid polypeptide reads, in one-letter code: Putative HTH-type transcriptional regulator rrf2-like (150 aa).

In terms of domain architecture, HTH rrf2-type spans 1-139 (MITQKMKYAL…DSLTLEDMLA (139 aa)).

The polypeptide is Putative HTH-type transcriptional regulator rrf2-like (Rhodobacter capsulatus (strain ATCC BAA-309 / NBRC 16581 / SB1003)).